We begin with the raw amino-acid sequence, 133 residues long: Ubiquitin-like FUBI-ribosomal protein eS30 fusion protein (133 aa).

Positions 1–74 (MQLFVRAQEL…LEVAGRMLGG (74 aa)) constitute a Ubiquitin-like domain. Lys125 bears the N6-succinyllysine mark.

It in the N-terminal section; belongs to the ubiquitin family. In the C-terminal section; belongs to the eukaryotic ribosomal protein eS30 family. Component of the 40S subunit of the ribosome. In terms of processing, FUBI is cleaved from ribosomal protein S30 by the deubiquitinase USP36 before the assembly of ribosomal protein S30 into pre-40S ribosomal particles. FUBI removal from ribosomal protein S30 is a crucial event for the final maturation of pre-40S particles.

The protein resides in the cytoplasm. It localises to the nucleus. Functionally, may have pro-apoptotic activity. Its function is as follows. Component of the 40S subunit of the ribosome. Contributes to the assembly and function of 40S ribosomal subunits. The chain is Ubiquitin-like FUBI-ribosomal protein eS30 fusion protein (FAU) from Oryctolagus cuniculus (Rabbit).